A 265-amino-acid chain; its full sequence is Indole-3-glycerol phosphate synthase (265 aa).

It belongs to the TrpC family.

It carries out the reaction 1-(2-carboxyphenylamino)-1-deoxy-D-ribulose 5-phosphate + H(+) = (1S,2R)-1-C-(indol-3-yl)glycerol 3-phosphate + CO2 + H2O. Its pathway is amino-acid biosynthesis; L-tryptophan biosynthesis; L-tryptophan from chorismate: step 4/5. The polypeptide is Indole-3-glycerol phosphate synthase (Xanthomonas oryzae pv. oryzae (strain PXO99A)).